The sequence spans 340 residues: Methionine import ATP-binding protein MetN 2 (340 aa).

The 240-residue stretch at 2-241 (ITLQNVVKEY…PQEKVTQRFV (240 aa)) folds into the ABC transporter domain. Residue 38–45 (GYSGAGKS) coordinates ATP.

It belongs to the ABC transporter superfamily. Methionine importer (TC 3.A.1.24) family. As to quaternary structure, the complex is composed of two ATP-binding proteins (MetN), two transmembrane proteins (MetI) and a solute-binding protein (MetQ).

It localises to the cell membrane. It carries out the reaction L-methionine(out) + ATP + H2O = L-methionine(in) + ADP + phosphate + H(+). The enzyme catalyses D-methionine(out) + ATP + H2O = D-methionine(in) + ADP + phosphate + H(+). Part of the ABC transporter complex MetNIQ involved in methionine import. Responsible for energy coupling to the transport system. This is Methionine import ATP-binding protein MetN 2 from Listeria monocytogenes serovar 1/2a (strain ATCC BAA-679 / EGD-e).